An 861-amino-acid chain; its full sequence is Leucine--tRNA ligase (861 aa).

Positions 42–52 (PYPSGRLHMGH) match the 'HIGH' region motif. A 'KMSKS' region motif is present at residues 619–623 (KMSKS). K622 provides a ligand contact to ATP.

The protein belongs to the class-I aminoacyl-tRNA synthetase family.

The protein resides in the cytoplasm. It carries out the reaction tRNA(Leu) + L-leucine + ATP = L-leucyl-tRNA(Leu) + AMP + diphosphate. In Haemophilus influenzae (strain PittGG), this protein is Leucine--tRNA ligase.